The chain runs to 462 residues: tRNA modification GTPase MnmE (462 aa).

Residues arginine 34, glutamate 92, and lysine 131 each coordinate (6S)-5-formyl-5,6,7,8-tetrahydrofolate. One can recognise a TrmE-type G domain in the interval 227-386; the sequence is GLQVVIAGKP…LIDAITAHAG (160 aa). K(+) is bound at residue asparagine 237. GTP contacts are provided by residues 237–242, 256–262, and 281–284; these read NAGKSS, TDIAGTT, and DTAG. Serine 241 is a Mg(2+) binding site. Residues threonine 256, isoleucine 258, and threonine 261 each coordinate K(+). Mg(2+) is bound at residue threonine 262. Residue lysine 462 participates in (6S)-5-formyl-5,6,7,8-tetrahydrofolate binding.

Belongs to the TRAFAC class TrmE-Era-EngA-EngB-Septin-like GTPase superfamily. TrmE GTPase family. In terms of assembly, homodimer. Heterotetramer of two MnmE and two MnmG subunits. Requires K(+) as cofactor.

It localises to the cytoplasm. In terms of biological role, exhibits a very high intrinsic GTPase hydrolysis rate. Involved in the addition of a carboxymethylaminomethyl (cmnm) group at the wobble position (U34) of certain tRNAs, forming tRNA-cmnm(5)s(2)U34. In Acinetobacter baylyi (strain ATCC 33305 / BD413 / ADP1), this protein is tRNA modification GTPase MnmE.